The chain runs to 250 residues: 2,3-bisphosphoglycerate-dependent phosphoglycerate mutase (250 aa).

Residues 10-17 (RHGESQWN), 23-24 (TG), Arg62, 89-92 (ERHY), Lys100, 116-117 (RR), and 185-186 (GN) each bind substrate. The active-site Tele-phosphohistidine intermediate is the His11. The active-site Proton donor/acceptor is Glu89.

It belongs to the phosphoglycerate mutase family. BPG-dependent PGAM subfamily. In terms of assembly, homodimer.

The catalysed reaction is (2R)-2-phosphoglycerate = (2R)-3-phosphoglycerate. It functions in the pathway carbohydrate degradation; glycolysis; pyruvate from D-glyceraldehyde 3-phosphate: step 3/5. Its function is as follows. Catalyzes the interconversion of 2-phosphoglycerate and 3-phosphoglycerate. This Salmonella choleraesuis (strain SC-B67) protein is 2,3-bisphosphoglycerate-dependent phosphoglycerate mutase.